A 169-amino-acid chain; its full sequence is Peptide deformylase (169 aa).

Residues Cys93 and His135 each coordinate Fe cation. Residue Glu136 is part of the active site. His139 contributes to the Fe cation binding site.

It belongs to the polypeptide deformylase family. Fe(2+) is required as a cofactor.

The enzyme catalyses N-terminal N-formyl-L-methionyl-[peptide] + H2O = N-terminal L-methionyl-[peptide] + formate. Its function is as follows. Removes the formyl group from the N-terminal Met of newly synthesized proteins. Requires at least a dipeptide for an efficient rate of reaction. N-terminal L-methionine is a prerequisite for activity but the enzyme has broad specificity at other positions. This chain is Peptide deformylase, found in Aquifex aeolicus (strain VF5).